Here is a 187-residue protein sequence, read N- to C-terminus: Cerebral dopamine neurotrophic factor (187 aa).

An N-terminal signal peptide occupies residues 1–24 (MRCTSPAALVTFCAGLWISNHVLA). Cystine bridges form between Cys-37–Cys-124, Cys-40–Cys-113, and Cys-71–Cys-82.

This sequence belongs to the ARMET family.

Its subcellular location is the secreted. Trophic factor for dopamine neurons. Prevents the 6-hydroxydopamine (6-OHDA)-induced degeneration of dopaminergic neurons. When administered after 6-OHDA-lesioning, restores the dopaminergic function and prevents the degeneration of dopaminergic neurons in substantia nigra. This Rattus norvegicus (Rat) protein is Cerebral dopamine neurotrophic factor (Cdnf).